A 540-amino-acid chain; its full sequence is Lysosomal cobalamin transport escort protein LMBD1 (540 aa).

The Extracellular segment spans residues 1–10; sequence MATPGAASAE. The chain crosses the membrane as a helical span at residues 11–31; it reads LVIGWCIFGLLLLAILAFCWI. Residues 32–50 lie on the Cytoplasmic side of the membrane; sequence YVRKYQSRRESEVVSTITA. The helical transmembrane segment at 51–71 threads the bilayer; the sequence is IFSLAIALITSALLPVDIFLV. At 72 to 100 the chain is on the extracellular side; the sequence is SYMKNQNGTFKDWANANVSRQIEDTVLYG. N-linked (GlcNAc...) asparagine glycans are attached at residues Asn78 and Asn88. A helical membrane pass occupies residues 101-121; the sequence is YYTLYSVILFCVFFWIPFVYF. At 122–144 the chain is on the cytoplasmic side; it reads YYEEKDDDDTSKCTQIKTALKYT. Residues 145–165 traverse the membrane as a helical segment; that stretch reads LGFVVICALLLLVGAFVPLNV. At 166 to 188 the chain is on the extracellular side; it reads PNNKNSTEWEKVKFLFEELGSSH. Asn170 carries N-linked (GlcNAc...) asparagine glycosylation. The chain crosses the membrane as a helical span at residues 189–209; that stretch reads GLAALSFSISSLTLIGMLAAI. Topologically, residues 210–305 are cytoplasmic; sequence TYTAYGMSAL…KFCGALRPLK (96 aa). The short motif at 232–235 is the YERL motif; mediates interaction with adapter protein complex 2 and is essential for its function in clathrin-mediated endocytosis of INSR element; sequence YERL. The residue at position 238 (Thr238) is a Phosphothreonine. The short motif at 294-297 is the WTKF motif; mediates interaction with adapter protein complex 2 and is essential for its function in clathrin-mediated endocytosis of INSR element; that stretch reads WTKF. Residues 306-326 traverse the membrane as a helical segment; it reads IIWGIFFILVALLFVISLFLS. Over 327–364 the chain is Extracellular; sequence NLDKALHSAGIDSGFIIFGANLSNPLNMLLPLLQTVFP. Residue Asn347 is glycosylated (N-linked (GlcNAc...) asparagine). A helical membrane pass occupies residues 365 to 385; the sequence is LDYILITIIIMYFIFTSMAGI. Topologically, residues 386–408 are cytoplasmic; that stretch reads RNIGIWFFWIRLYKIRRGRTRPQ. Residues 409 to 429 form a helical membrane-spanning segment; it reads ALLFLCMILLLIVLHTSYMIY. Residues 430–486 are Extracellular-facing; it reads SLAPQYVMYGSQNYLIETNITSDNHKGNSTLSVPKRCDADAPEDQCTVTRTYLFLHK. Residues Asn448 and Asn457 are each glycosylated (N-linked (GlcNAc...) asparagine). A helical transmembrane segment spans residues 487–507; sequence FWFFSAAYYFGNWAFLGVFLI. Residues 508–540 lie on the Cytoplasmic side of the membrane; it reads GLIVSCCKGKKSVIEGVDEDSDISDDEPSVYSV. Residues Ser528 and Ser531 each carry the phosphoserine modification.

The protein belongs to the LIMR family. LMBRD1 subfamily. In terms of assembly, interacts with ABCD4; this interaction induces the translocation of ABCD4 from the endoplasmic reticulum to the lysosome. Interacts with ABCD4 and MMACHC; this interaction ensures the transport of cobalamin from the lysosome to the cytoplasm. Interacts with INSR, adapter protein complex 2 and clathrin heavy chain. Post-translationally, N-glycosylated.

It localises to the lysosome membrane. Its subcellular location is the cell membrane. It is found in the cytoplasmic vesicle. The protein resides in the clathrin-coated vesicle. In terms of biological role, lysosomal membrane chaperone required to export cobalamin (vitamin B12) from lysosome to the cytosol, allowing its conversion to cofactors. Targets ABCD4 transporter from the endoplasmic reticulum to the lysosomal membrane. Then forms a complex with lysosomal transporter ABCD4 and cytoplasmic MMACHC to transport cobalamin across the lysosomal membrane. Acts as an adapter protein which plays an important role in mediating and regulating the internalization of the insulin receptor (INSR). Involved in clathrin-mediated endocytosis of INSR via its interaction with adapter protein complex 2. Essential for the initiation of gastrulation and early formation of mesoderm structures during embryogenesis. The sequence is that of Lysosomal cobalamin transport escort protein LMBD1 (LMBRD1) from Macaca fascicularis (Crab-eating macaque).